The sequence spans 428 residues: Adenylosuccinate synthetase (428 aa).

GTP is bound by residues 12 to 18 (GDEGKGK) and 40 to 42 (GHT). The active-site Proton acceptor is the Asp-13. The Mg(2+) site is built by Asp-13 and Gly-40. IMP is bound by residues 13–16 (DEGK), 38–41 (NAGH), Thr-129, Arg-143, Gln-224, Thr-239, and Arg-303. The active-site Proton donor is His-41. A substrate-binding site is contributed by 299–305 (VTTGRIR). Residues Arg-305, 331 to 333 (KVD), and 410 to 412 (AYG) each bind GTP.

This sequence belongs to the adenylosuccinate synthetase family. As to quaternary structure, homodimer. Mg(2+) is required as a cofactor.

The protein resides in the cytoplasm. It catalyses the reaction IMP + L-aspartate + GTP = N(6)-(1,2-dicarboxyethyl)-AMP + GDP + phosphate + 2 H(+). It participates in purine metabolism; AMP biosynthesis via de novo pathway; AMP from IMP: step 1/2. In terms of biological role, plays an important role in the de novo pathway of purine nucleotide biosynthesis. Catalyzes the first committed step in the biosynthesis of AMP from IMP. In Francisella philomiragia subsp. philomiragia (strain ATCC 25017 / CCUG 19701 / FSC 153 / O#319-036), this protein is Adenylosuccinate synthetase.